A 389-amino-acid chain; its full sequence is Probable peptidoglycan glycosyltransferase FtsW (389 aa).

Residues 1–14 (MPIRDWRQQSQRWP) lie on the Cytoplasmic side of the membrane. Residues 15 to 35 (IDYWLIGALAILITLGLTMVA) traverse the membrane as a helical segment. Topologically, residues 36–57 (SSSIAISEKRFGDPTHYLLRQM) are periplasmic. Residues 58–78 (FSMGLGLMAAYIVLKIPLSFW) traverse the membrane as a helical segment. At 79–84 (RKHRGQ) the chain is on the cytoplasmic side. Residues 85–105 (LFIVGLVLLVLVLVFGREING) form a helical membrane-spanning segment. Residues 106-111 (SKRWLP) lie on the Periplasmic side of the membrane. Residues 112 to 132 (LVLMNFQVSEFMKIAVVVFMA) form a helical membrane-spanning segment. The Cytoplasmic portion of the chain corresponds to 133 to 144 (GYLDRHATAVRE). A helical transmembrane segment spans residues 145 to 165 (SFEAVIRLALPFGVMAILLLL). Topologically, residues 166 to 168 (EPD) are periplasmic. A helical transmembrane segment spans residues 169–189 (FGSTFVIAVIITGMLLIAGAP). At 190-191 (WR) the chain is on the cytoplasmic side. The chain crosses the membrane as a helical span at residues 192 to 212 (FFVMTVLPIATLLVMMVITSP). Over 213–268 (YRMARVTNFLDPWSDPFGNGYQLTQALIASGRGEWFGVGIGESVQKLLYLPDAHTD) the chain is Periplasmic. A helical transmembrane segment spans residues 269–289 (FLFSIYAEEYGLIGVAFLALL). Residues 290–310 (YLTLLYRCFRIGRKAFNQTHY) lie on the Cytoplasmic side of the membrane. A helical transmembrane segment spans residues 311 to 331 (FGGLIAYGVGIWIVLQAMINM). The Periplasmic portion of the chain corresponds to 332-344 (GVNLGLFPTKGLT). Residues 345–365 (LPFMSYGGSSVLMLFIGVAMV) form a helical membrane-spanning segment. The Cytoplasmic segment spans residues 366–389 (LRVDLETRQAVLEHSVDESGQGKR).

The protein belongs to the SEDS family. FtsW subfamily.

It is found in the cell inner membrane. The enzyme catalyses [GlcNAc-(1-&gt;4)-Mur2Ac(oyl-L-Ala-gamma-D-Glu-L-Lys-D-Ala-D-Ala)](n)-di-trans,octa-cis-undecaprenyl diphosphate + beta-D-GlcNAc-(1-&gt;4)-Mur2Ac(oyl-L-Ala-gamma-D-Glu-L-Lys-D-Ala-D-Ala)-di-trans,octa-cis-undecaprenyl diphosphate = [GlcNAc-(1-&gt;4)-Mur2Ac(oyl-L-Ala-gamma-D-Glu-L-Lys-D-Ala-D-Ala)](n+1)-di-trans,octa-cis-undecaprenyl diphosphate + di-trans,octa-cis-undecaprenyl diphosphate + H(+). The protein operates within cell wall biogenesis; peptidoglycan biosynthesis. Functionally, peptidoglycan polymerase that is essential for cell division. The protein is Probable peptidoglycan glycosyltransferase FtsW of Hydrogenovibrio crunogenus (strain DSM 25203 / XCL-2) (Thiomicrospira crunogena).